Reading from the N-terminus, the 429-residue chain is Histidine--tRNA ligase (429 aa).

Belongs to the class-II aminoacyl-tRNA synthetase family. Homodimer.

The protein localises to the cytoplasm. It catalyses the reaction tRNA(His) + L-histidine + ATP = L-histidyl-tRNA(His) + AMP + diphosphate + H(+). This is Histidine--tRNA ligase from Cyanothece sp. (strain PCC 7425 / ATCC 29141).